Consider the following 423-residue polypeptide: Adenylosuccinate synthetase (423 aa).

GTP-binding positions include 12–18 (GDEGKGK) and 40–42 (GHT). D13 serves as the catalytic Proton acceptor. The Mg(2+) site is built by D13 and G40. IMP-binding positions include 13-16 (DEGK), 38-41 (NAGH), T129, R143, Q221, T236, and R300. The active-site Proton donor is the H41. 296–302 (SVTGRKR) contacts substrate. GTP contacts are provided by residues R302 and 408 to 410 (SVG).

The protein belongs to the adenylosuccinate synthetase family. In terms of assembly, homodimer. Requires Mg(2+) as cofactor.

The protein localises to the cytoplasm. It catalyses the reaction IMP + L-aspartate + GTP = N(6)-(1,2-dicarboxyethyl)-AMP + GDP + phosphate + 2 H(+). It functions in the pathway purine metabolism; AMP biosynthesis via de novo pathway; AMP from IMP: step 1/2. Functionally, plays an important role in the de novo pathway of purine nucleotide biosynthesis. Catalyzes the first committed step in the biosynthesis of AMP from IMP. The polypeptide is Adenylosuccinate synthetase (Bacteroides thetaiotaomicron (strain ATCC 29148 / DSM 2079 / JCM 5827 / CCUG 10774 / NCTC 10582 / VPI-5482 / E50)).